The sequence spans 670 residues: DNA ligase (670 aa).

NAD(+) is bound by residues 35–39 (DSVYD), 84–85 (SL), and Glu-116. The N6-AMP-lysine intermediate role is filled by Lys-118. NAD(+) contacts are provided by Arg-139, Glu-176, Lys-293, and Lys-317. 4 residues coordinate Zn(2+): Cys-411, Cys-414, Cys-429, and Cys-435. In terms of domain architecture, BRCT spans 592–670 (VVKSEIAGKT…EEAFLKLLKS (79 aa)).

This sequence belongs to the NAD-dependent DNA ligase family. LigA subfamily. It depends on Mg(2+) as a cofactor. Mn(2+) is required as a cofactor.

It catalyses the reaction NAD(+) + (deoxyribonucleotide)n-3'-hydroxyl + 5'-phospho-(deoxyribonucleotide)m = (deoxyribonucleotide)n+m + AMP + beta-nicotinamide D-nucleotide.. Functionally, DNA ligase that catalyzes the formation of phosphodiester linkages between 5'-phosphoryl and 3'-hydroxyl groups in double-stranded DNA using NAD as a coenzyme and as the energy source for the reaction. It is essential for DNA replication and repair of damaged DNA. The polypeptide is DNA ligase (Coxiella burnetii (strain RSA 331 / Henzerling II)).